Here is a 282-residue protein sequence, read N- to C-terminus: Probable endonuclease 4 (282 aa).

Residues histidine 66, histidine 106, glutamate 143, aspartate 176, histidine 179, histidine 213, aspartate 226, histidine 228, and glutamate 258 each contribute to the Zn(2+) site.

Belongs to the AP endonuclease 2 family. Zn(2+) is required as a cofactor.

It catalyses the reaction Endonucleolytic cleavage to 5'-phosphooligonucleotide end-products.. In terms of biological role, endonuclease IV plays a role in DNA repair. It cleaves phosphodiester bonds at apurinic or apyrimidinic (AP) sites, generating a 3'-hydroxyl group and a 5'-terminal sugar phosphate. The polypeptide is Probable endonuclease 4 (Aquifex aeolicus (strain VF5)).